We begin with the raw amino-acid sequence, 275 residues long: Voltage-dependent calcium channel gamma-5 subunit (275 aa).

Helical transmembrane passes span 8 to 28, 103 to 123, 129 to 149, and 181 to 201; these read ALTL…GIAV, FPLV…IGHI, ILAF…VVGL, and FAAI…YLFM.

It belongs to the PMP-22/EMP/MP20 family. CACNG subfamily. In terms of assembly, the L-type calcium channel is composed of five subunits: alpha-1, alpha-2/delta, beta and gamma. Acts as an auxiliary subunit for AMPA-selective glutamate receptors (AMPARs). Found in a complex with GRIA1, GRIA2, GRIA3, GRIA4, CNIH2, CNIH3, CACNG2, CACNG3, CACNG4, CACNG7 and CACNG8. Interacts with GRIA1, GRIA2, GRIA3 and GRIA4. Brain. Enriched in Bergman glia, as well as a variety of neuronal populations including locus coeruleus, olfactory bulb, lateral septal nucleus, interpeduncular nucleus, and the CA2 and rostral/medial CA1 regions of hippocampus.

The protein resides in the membrane. Its subcellular location is the postsynaptic density membrane. Functionally, regulates the gating properties of AMPA-selective glutamate receptors (AMPARs). Modulates their gating properties by accelerating their rates of activation, deactivation and desensitization. Displays subunit-specific AMPA receptor regulation. Shows specificity for GRIA1, GRIA4 and the long isoform of GRIA2. Thought to stabilize the calcium channel in an inactivated (closed) state. This is Voltage-dependent calcium channel gamma-5 subunit (Cacng5) from Mus musculus (Mouse).